The primary structure comprises 376 residues: RING-H2 finger protein ATL46 (376 aa).

Residues 45–65 (VLFVIVILAVLFFISGLLHLL) form a helical membrane-spanning segment. Residues 143 to 185 (CAVCLCEFSEKDKLRLLPMCSHAFHLNCIDTWLQSNSTCPLCR) form an RING-type; atypical zinc finger. 2 stretches are compositionally biased toward basic and acidic residues: residues 296–305 (RLKPQDKESE) and 358–376 (DLPK…NDGR). 2 disordered regions span residues 296 to 320 (RLKP…KINT) and 341 to 376 (FSSD…NDGR).

This sequence belongs to the RING-type zinc finger family. ATL subfamily.

It is found in the membrane. It catalyses the reaction S-ubiquitinyl-[E2 ubiquitin-conjugating enzyme]-L-cysteine + [acceptor protein]-L-lysine = [E2 ubiquitin-conjugating enzyme]-L-cysteine + N(6)-ubiquitinyl-[acceptor protein]-L-lysine.. It participates in protein modification; protein ubiquitination. This Arabidopsis thaliana (Mouse-ear cress) protein is RING-H2 finger protein ATL46 (ATL46).